We begin with the raw amino-acid sequence, 375 residues long: MSCPVIELTQQLIRRPSLSPDDAGCQALMIERLRKIGFTIEHMDFGDTQNFWAWRGRGETLAFAGHTDVVPAGDVDRWINPPFEPTIRDGMLFGRGAADMKGSLAAMVVAAERFVAQHPHHRGRLAFLITSDEEASAKNGTVKVVEALMARHERLDYCLVGEPSSTEIVGDVVKNGRRGSLTCNLTIHGVQGHVAYPHLADNPVHRAAPFLNELVAIEWDRGNDFFPATSMQVANIQAGTGSNNVIPGELFVQFNFRFSTELTDEMIKERVHALLEKHQLRYTVDWWLSGQPFLTARGKLVDAVVNAIEHYNEIKPQLLTTGGTSDGRFIARMGAQVVELGPVNATIHKINECVNAADLQLLARMYQRIMEQLVA.

A Zn(2+)-binding site is contributed by His-66. Asp-68 is an active-site residue. Position 99 (Asp-99) interacts with Zn(2+). The active-site Proton acceptor is Glu-133. Residues Glu-134, Glu-162, and His-348 each contribute to the Zn(2+) site.

This sequence belongs to the peptidase M20A family. DapE subfamily. In terms of assembly, homodimer. The cofactor is Zn(2+). It depends on Co(2+) as a cofactor.

The enzyme catalyses N-succinyl-(2S,6S)-2,6-diaminopimelate + H2O = (2S,6S)-2,6-diaminopimelate + succinate. It functions in the pathway amino-acid biosynthesis; L-lysine biosynthesis via DAP pathway; LL-2,6-diaminopimelate from (S)-tetrahydrodipicolinate (succinylase route): step 3/3. Functionally, catalyzes the hydrolysis of N-succinyl-L,L-diaminopimelic acid (SDAP), forming succinate and LL-2,6-diaminopimelate (DAP), an intermediate involved in the bacterial biosynthesis of lysine and meso-diaminopimelic acid, an essential component of bacterial cell walls. This is Succinyl-diaminopimelate desuccinylase from Salmonella agona (strain SL483).